The chain runs to 453 residues: MALPNKFFLWFCCFAWLCFPISLDSLPSRGEAQIVARTALESEAETWSLLNHLGGRHRPGLLSPLLKVLYDGHGEPPRLQPDDRALRYMKRLYKAYATKEGTPKSNRRHLYNTVRLFTPCAQHKQAPGDLAAGTFPSVDLLFNLDRVTVVEHLFKSVLLYTFNNSISFPFPVKCICNLVIKEPEFSSKTLPRAPYSFTYNSQFEFRKKYKWMEIDVTAPLEPLVASHKRNIHMSVNFTCAKDQLQHPSARDSLFNMTLLVAPSLLLYLNDTSAQAFHRWHSLHPKRKPSQGPDQRRELSAYPVGEEAAEGVRSSRHRRDQESVSSELKKPLVPASANLSEYFKQFLFPQNECELHDFRLSFSQLKWDNWIVAPHKYNPRYCKGDCPRAVGHRYGSPVHTMVQNIIHEKLDSSVPRPSCVPAKYSPLSVLAIEPDGSIAYKEYEDMIATKCTCR.

An N-terminal signal peptide occupies residues 1 to 27; that stretch reads MALPNKFFLWFCCFAWLCFPISLDSLP. Positions 28 to 318 are excised as a propeptide; it reads SRGEAQIVAR…EGVRSSRHRR (291 aa). N-linked (GlcNAc...) asparagine glycosylation is found at Asn163, Asn236, Asn255, and Asn269. The interval 282 to 328 is disordered; it reads LHPKRKPSQGPDQRRELSAYPVGEEAAEGVRSSRHRRDQESVSSELK. Basic and acidic residues predominate over residues 318–328; sequence RDQESVSSELK. Asn337 carries N-linked (GlcNAc...) asparagine glycosylation. Intrachain disulfides connect Cys352-Cys418, Cys381-Cys450, and Cys385-Cys452.

It belongs to the TGF-beta family. Homodimer or heterodimer (Potential). But, in contrast to other members of this family, cannot be disulfide-linked. Post-translationally, phosphorylated; phosphorylation is critical for GDF9 function.

It localises to the secreted. Its function is as follows. Required for ovarian folliculogenesis. This chain is Growth/differentiation factor 9 (GDF9), found in Capra hircus (Goat).